Reading from the N-terminus, the 431-residue chain is Hydroxylamine reductase (431 aa).

[4Fe-4S] cluster-binding residues include cysteine 5, cysteine 8, cysteine 17, and cysteine 23. Hybrid [4Fe-2O-2S] cluster contacts are provided by histidine 131, glutamate 155, cysteine 199, cysteine 286, cysteine 314, cysteine 339, glutamate 373, and lysine 375. The residue at position 286 (cysteine 286) is a Cysteine persulfide.

The protein belongs to the HCP family. The cofactor is [4Fe-4S] cluster. Hybrid [4Fe-2O-2S] cluster is required as a cofactor.

The protein resides in the cytoplasm. The enzyme catalyses A + NH4(+) + H2O = hydroxylamine + AH2 + H(+). Functionally, catalyzes the reduction of hydroxylamine to form NH(3) and H(2)O. The polypeptide is Hydroxylamine reductase (Thermotoga petrophila (strain ATCC BAA-488 / DSM 13995 / JCM 10881 / RKU-1)).